The following is an 87-amino-acid chain: Pro-gurmarin (87 aa).

The first 20 residues, 1-20 (MAKFAAIVLLILVASATVNA), serve as a signal peptide directing secretion. Positions 21-52 (VKEHDELPTTGMSRKILLQPVFKSLIISIAEG) are excised as a propeptide. Q53 bears the Pyrrolidone carboxylic acid mark. 3 disulfides stabilise this stretch: C55–C70, C62–C75, and C69–C85.

As to expression, expressed in leaves (at protein level).

Its function is as follows. Peptide that strongly, but reversibly, suppresses the sweet taste-response to various sweeteners, including sugars, sweet amino acids and the artificial sweetener saccharin. In rodents, potentially binds to a sweet taste receptor present on apical microvilli of a subset of taste bud cells. Highly effective at blocking the sweet taste-response in rodents such as rats and mice, though mice may possess a mix of gurmarin-sensitive and -insensitive receptors. Has almost no effect on the sweet taste-response in humans. Inhibits Staphylococcus aureus biofilm formation without affecting bacterial viability. May be one of at least 9 different disulfide-rich peptides produced with varying properties. The chain is Pro-gurmarin from Gymnema sylvestre (Gurmar).